Reading from the N-terminus, the 433-residue chain is 3-phosphoshikimate 1-carboxyvinyltransferase (433 aa).

3 residues coordinate 3-phosphoshikimate: Lys-21, Ser-22, and Arg-26. Position 21 (Lys-21) interacts with phosphoenolpyruvate. Phosphoenolpyruvate contacts are provided by Gly-92 and Arg-120. Residues Ser-166, Gln-168, Asp-317, and Lys-344 each coordinate 3-phosphoshikimate. Gln-168 contacts phosphoenolpyruvate. Catalysis depends on Asp-317, which acts as the Proton acceptor. Arg-348 and Arg-391 together coordinate phosphoenolpyruvate.

This sequence belongs to the EPSP synthase family. In terms of assembly, monomer.

It is found in the cytoplasm. The enzyme catalyses 3-phosphoshikimate + phosphoenolpyruvate = 5-O-(1-carboxyvinyl)-3-phosphoshikimate + phosphate. The protein operates within metabolic intermediate biosynthesis; chorismate biosynthesis; chorismate from D-erythrose 4-phosphate and phosphoenolpyruvate: step 6/7. In terms of biological role, catalyzes the transfer of the enolpyruvyl moiety of phosphoenolpyruvate (PEP) to the 5-hydroxyl of shikimate-3-phosphate (S3P) to produce enolpyruvyl shikimate-3-phosphate and inorganic phosphate. The polypeptide is 3-phosphoshikimate 1-carboxyvinyltransferase (Caldicellulosiruptor saccharolyticus (strain ATCC 43494 / DSM 8903 / Tp8T 6331)).